Here is a 138-residue protein sequence, read N- to C-terminus: Large ribosomal subunit protein bL19 (138 aa).

The protein belongs to the bacterial ribosomal protein bL19 family.

Its function is as follows. This protein is located at the 30S-50S ribosomal subunit interface and may play a role in the structure and function of the aminoacyl-tRNA binding site. This is Large ribosomal subunit protein bL19 from Rickettsia peacockii (strain Rustic).